The chain runs to 339 residues: UPF0324 membrane protein spyM18_1033 (339 aa).

9 consecutive transmembrane segments (helical) span residues 7–24 (KLPGLLLCLLLALPAWYL), 28–50 (FPIIGAPVFAILLGMLLALFYGH), 57–79 (GISFTSKCILQTAVVLLGFGLNL), 84–106 (AVGMQSLPIIISTIATALLVAYG), 118–140 (ATLVGVGSSICGGSAIAATAPVI), 150–172 (AISVIFLFNMLAALLFPSLGQLL), 256–275 (FILFFLLASLITTLMTSFGV), 290–307 (FIVMAMAAIGLNTNLVKL), and 314–336 (AILLGAICWVAITLVSLAMQLSL).

The protein belongs to the UPF0324 family.

It localises to the cell membrane. This chain is UPF0324 membrane protein spyM18_1033, found in Streptococcus pyogenes serotype M18 (strain MGAS8232).